The primary structure comprises 458 residues: Bifunctional protein GlmU (458 aa).

The tract at residues Met1–Arg230 is pyrophosphorylase. UDP-N-acetyl-alpha-D-glucosamine is bound by residues Leu9–Gly12, Lys23, Gln73, and Gly78–Thr79. Mg(2+) is bound at residue Asp103. 4 residues coordinate UDP-N-acetyl-alpha-D-glucosamine: Gly140, Glu155, Asn170, and Asn228. Asn228 lines the Mg(2+) pocket. The segment at Val231–Ala251 is linker. An N-acetyltransferase region spans residues Gly252 to Gln458. The UDP-N-acetyl-alpha-D-glucosamine site is built by Arg333 and Lys351. The active-site Proton acceptor is the His363. Residues Tyr366 and Asn377 each contribute to the UDP-N-acetyl-alpha-D-glucosamine site. Residues Ala380, Asn386–Tyr387, Ser405, Ala423, and Arg440 each bind acetyl-CoA.

This sequence in the N-terminal section; belongs to the N-acetylglucosamine-1-phosphate uridyltransferase family. The protein in the C-terminal section; belongs to the transferase hexapeptide repeat family. Homotrimer. Requires Mg(2+) as cofactor.

It localises to the cytoplasm. The enzyme catalyses alpha-D-glucosamine 1-phosphate + acetyl-CoA = N-acetyl-alpha-D-glucosamine 1-phosphate + CoA + H(+). It carries out the reaction N-acetyl-alpha-D-glucosamine 1-phosphate + UTP + H(+) = UDP-N-acetyl-alpha-D-glucosamine + diphosphate. The protein operates within nucleotide-sugar biosynthesis; UDP-N-acetyl-alpha-D-glucosamine biosynthesis; N-acetyl-alpha-D-glucosamine 1-phosphate from alpha-D-glucosamine 6-phosphate (route II): step 2/2. It functions in the pathway nucleotide-sugar biosynthesis; UDP-N-acetyl-alpha-D-glucosamine biosynthesis; UDP-N-acetyl-alpha-D-glucosamine from N-acetyl-alpha-D-glucosamine 1-phosphate: step 1/1. It participates in bacterial outer membrane biogenesis; LPS lipid A biosynthesis. Its function is as follows. Catalyzes the last two sequential reactions in the de novo biosynthetic pathway for UDP-N-acetylglucosamine (UDP-GlcNAc). The C-terminal domain catalyzes the transfer of acetyl group from acetyl coenzyme A to glucosamine-1-phosphate (GlcN-1-P) to produce N-acetylglucosamine-1-phosphate (GlcNAc-1-P), which is converted into UDP-GlcNAc by the transfer of uridine 5-monophosphate (from uridine 5-triphosphate), a reaction catalyzed by the N-terminal domain. The chain is Bifunctional protein GlmU from Heliobacterium modesticaldum (strain ATCC 51547 / Ice1).